A 349-amino-acid chain; its full sequence is RING-H2 finger protein ATL48 (349 aa).

In terms of domain architecture, HIG1 spans Met-1 to Ser-85. N-acetylserine is present on Ser-2. 3 helical membrane-spanning segments follow: residues Pro-21–Phe-41, Ala-55–Gly-75, and Cys-121–Phe-141. The RING-type; atypical zinc finger occupies Cys-207 to Arg-249.

The protein belongs to the RING-type zinc finger family. ATL subfamily.

The protein resides in the membrane. It carries out the reaction S-ubiquitinyl-[E2 ubiquitin-conjugating enzyme]-L-cysteine + [acceptor protein]-L-lysine = [E2 ubiquitin-conjugating enzyme]-L-cysteine + N(6)-ubiquitinyl-[acceptor protein]-L-lysine.. Its pathway is protein modification; protein ubiquitination. This is RING-H2 finger protein ATL48 (ATL48) from Arabidopsis thaliana (Mouse-ear cress).